A 749-amino-acid chain; its full sequence is Homeobox-leucine zipper protein ROC7 (749 aa).

The tract at residues 26–98 (LDQHQQHQHQ…KKRYHRHTQH (73 aa)) is disordered. Residues 46 to 57 (SDGRAPRDELEM) show a composition bias toward basic and acidic residues. A compositionally biased stretch (gly residues) spans 68-78 (SGGGGGGGGSG). Residues 86–97 (RPRKKRYHRHTQ) show a composition bias toward basic residues. The homeobox DNA-binding region spans 88–147 (RKKRYHRHTQHQIQELEAFFKECPHPDDKQRKELSRELGLEPLQVKFWFQNKRTQMKTQH). A coiled-coil region spans residues 137-218 (QNKRTQMKTQ…DRISAIAAKY (82 aa)). Residues 256-494 (ADFDKPLVIE…LERQCERLAS (239 aa)) enclose the START domain.

The protein belongs to the HD-ZIP homeobox family. Class IV subfamily.

The protein localises to the nucleus. In terms of biological role, probable transcription factor. The chain is Homeobox-leucine zipper protein ROC7 (ROC7) from Oryza sativa subsp. indica (Rice).